The sequence spans 439 residues: CBL-interacting serine/threonine-protein kinase 26 (439 aa).

Residues 13–268 (YEVGKTLGQG…IPEVLGDAWF (256 aa)) form the Protein kinase domain. Residues 19–27 (LGQGTFAKV) and lysine 42 contribute to the ATP site. Aspartate 136 (proton acceptor) is an active-site residue. The tract at residues 154-183 (DFGLSALSRQVRGDGLLHTACGTPNYAAPE) is activation loop. Serine 158 is subject to Phosphoserine. Threonine 172 bears the Phosphothreonine mark. The 25-residue stretch at 306–330 (EQPTSMNAFELISMSRALDLGNLFE) folds into the NAF domain. A PPI region spans residues 336-365 (KRETRFAAKGAANDLVQKIEEASKPLGFDI).

The protein belongs to the protein kinase superfamily. CAMK Ser/Thr protein kinase family. SNF1 subfamily. Interacts with RBOHF (via N-terminus). It depends on Mn(2+) as a cofactor.

The protein resides in the cell membrane. It carries out the reaction L-seryl-[protein] + ATP = O-phospho-L-seryl-[protein] + ADP + H(+). The enzyme catalyses L-threonyl-[protein] + ATP = O-phospho-L-threonyl-[protein] + ADP + H(+). Functionally, CIPK serine-threonine protein kinases interact with CBL proteins. Binding of a CBL protein to the regulatory NAF domain of CIPK protein lead to the activation of the kinase in a calcium-dependent manner. Involved in the calcium-dependent regulation of reactive oxygen species production by the NADPH oxidase RBOHF. The sequence is that of CBL-interacting serine/threonine-protein kinase 26 (CIPK26) from Arabidopsis thaliana (Mouse-ear cress).